The chain runs to 490 residues: GTPase Der (490 aa).

The 165-residue stretch at 1–165 (MRIAILGRPN…RIRQVAEIPL (165 aa)) folds into the EngA-type G 1 domain. GTP contacts are provided by residues 7 to 14 (GRPNVGKS), 54 to 58 (DTGGV), and 117 to 120 (NKAD). The disordered stretch occupies residues 165–184 (LPSAEEQENTQEEEFSSKES). The span at 169-178 (EEQENTQEEE) shows a compositional bias: acidic residues. Residues 227–400 (LKVALIGHPN…AVDDVYTIAT (174 aa)) enclose the EngA-type G 2 domain. GTP contacts are provided by residues 233-240 (GHPNVGKS), 280-284 (DTAGL), and 345-348 (NKWD). The 85-residue stretch at 401–485 (TKLSTSLVNK…PFDLEYKAKP (85 aa)) folds into the KH-like domain.

This sequence belongs to the TRAFAC class TrmE-Era-EngA-EngB-Septin-like GTPase superfamily. EngA (Der) GTPase family. In terms of assembly, associates with the 50S ribosomal subunit.

GTPase that plays an essential role in the late steps of ribosome biogenesis. This Chlamydia muridarum (strain MoPn / Nigg) protein is GTPase Der.